Here is a 203-residue protein sequence, read N- to C-terminus: Histidine biosynthesis bifunctional protein HisIE (203 aa).

The tract at residues 1–114 is phosphoribosyl-AMP cyclohydrolase; sequence MLTEQQRREL…FGDASHQWLF (114 aa). Positions 115-203 are phosphoribosyl-ATP pyrophosphohydrolase; it reads LYQLEQLLAE…VIDNLRKRHQ (89 aa).

In the N-terminal section; belongs to the PRA-CH family. The protein in the C-terminal section; belongs to the PRA-PH family.

The protein localises to the cytoplasm. It catalyses the reaction 1-(5-phospho-beta-D-ribosyl)-ATP + H2O = 1-(5-phospho-beta-D-ribosyl)-5'-AMP + diphosphate + H(+). It carries out the reaction 1-(5-phospho-beta-D-ribosyl)-5'-AMP + H2O = 1-(5-phospho-beta-D-ribosyl)-5-[(5-phospho-beta-D-ribosylamino)methylideneamino]imidazole-4-carboxamide. It participates in amino-acid biosynthesis; L-histidine biosynthesis; L-histidine from 5-phospho-alpha-D-ribose 1-diphosphate: step 2/9. It functions in the pathway amino-acid biosynthesis; L-histidine biosynthesis; L-histidine from 5-phospho-alpha-D-ribose 1-diphosphate: step 3/9. In Salmonella typhimurium (strain LT2 / SGSC1412 / ATCC 700720), this protein is Histidine biosynthesis bifunctional protein HisIE (hisI).